A 95-amino-acid chain; its full sequence is Cliotide T1 (95 aa).

The cyclopeptide (Gly-Asn) cross-link spans 1 to 30 (GIPCGESCVFIPCITGAIGCSCKSKVCYRN). 3 cysteine pairs are disulfide-bonded: Cys4–Cys20, Cys8–Cys22, and Cys13–Cys27. Residues 31–95 (HVIAAEAKTM…KDHLKMSITN (65 aa)) constitute a propeptide, removed in mature form.

Contains 3 disulfide bonds. Post-translationally, this is a cyclic peptide. As to expression, expressed in flower, stem, shoot, root, leaf, seed, pod and nodule (at protein level).

Probably participates in a plant defense mechanism. Active against Gram-negative bacteria E.coli ATCC 700926 (MIC=1.1 uM), K.pneumoniae ATTC 13883 (MIC=2.7 uM) and P.aeruginosa ATCC 39018 (MIC=4.7 uM). Has hemolytic and cytotoxic activity. The chain is Cliotide T1 from Clitoria ternatea (Butterfly pea).